The primary structure comprises 485 residues: Alpha-amylase (485 aa).

The N-terminal stretch at 1–18 is a signal peptide; it reads MQHLSILLVVLGSSIAFA. Q19 is modified (pyrrolidone carboxylic acid). C46 and C102 are joined by a disulfide. Ca(2+) contacts are provided by N116, R163, and D172. A disulfide bond links C152 and C165. Position 200 (R200) interacts with chloride. The active-site Nucleophile is the D202. Residue H206 participates in Ca(2+) binding. E238 serves as the catalytic Proton donor. A chloride-binding site is contributed by N301. A disulfide bond links C369 and C375. N-linked (GlcNAc...) asparagine glycans are attached at residues N423 and N449. An intrachain disulfide couples C440 to C452.

Belongs to the glycosyl hydrolase 13 family. As to quaternary structure, monomer. The cofactor is Ca(2+). Requires chloride as cofactor.

It carries out the reaction Endohydrolysis of (1-&gt;4)-alpha-D-glucosidic linkages in polysaccharides containing three or more (1-&gt;4)-alpha-linked D-glucose units.. Involved in the digestion of starch. The sequence is that of Alpha-amylase from Hypothenemus hampei (Coffee berry borer).